Reading from the N-terminus, the 472-residue chain is ATP-dependent rRNA helicase rrp3 (472 aa).

Residues methionine 1–lysine 52 are disordered. Positions alanine 10–aspartate 19 are enriched in basic and acidic residues. Residues threonine 20–glutamine 31 show a composition bias toward polar residues. Residues lysine 52 to alanine 80 carry the Q motif motif. In terms of domain architecture, Helicase ATP-binding spans isoleucine 83–valine 254. Alanine 96–threonine 103 contributes to the ATP binding site. The DEAD box signature appears at aspartate 202–aspartate 205. A Helicase C-terminal domain is found at tyrosine 282–methionine 426. The segment at lysine 444 to glycine 472 is disordered. Basic residues predominate over residues threonine 452 to arginine 462.

The protein belongs to the DEAD box helicase family. DDX47/RRP3 subfamily. Interacts with the SSU processome.

It localises to the nucleus. It catalyses the reaction ATP + H2O = ADP + phosphate + H(+). Functionally, ATP-dependent rRNA helicase required for pre-ribosomal RNA processing. Involved in the maturation of the 35S-pre-rRNA and to its cleavage to mature 18S rRNA. The polypeptide is ATP-dependent rRNA helicase rrp3 (Aspergillus fumigatus (strain ATCC MYA-4609 / CBS 101355 / FGSC A1100 / Af293) (Neosartorya fumigata)).